The primary structure comprises 163 residues: ATP synthase subunit b 1 (163 aa).

The chain crosses the membrane as a helical span at residues 7 to 27; it reads AETWVAIAFVILLGVFAYLGV.

It belongs to the ATPase B chain family. In terms of assembly, F-type ATPases have 2 components, F(1) - the catalytic core - and F(0) - the membrane proton channel. F(1) has five subunits: alpha(3), beta(3), gamma(1), delta(1), epsilon(1). F(0) has three main subunits: a(1), b(2) and c(10-14). The alpha and beta chains form an alternating ring which encloses part of the gamma chain. F(1) is attached to F(0) by a central stalk formed by the gamma and epsilon chains, while a peripheral stalk is formed by the delta and b chains.

The protein resides in the cell inner membrane. Its function is as follows. F(1)F(0) ATP synthase produces ATP from ADP in the presence of a proton or sodium gradient. F-type ATPases consist of two structural domains, F(1) containing the extramembraneous catalytic core and F(0) containing the membrane proton channel, linked together by a central stalk and a peripheral stalk. During catalysis, ATP synthesis in the catalytic domain of F(1) is coupled via a rotary mechanism of the central stalk subunits to proton translocation. Functionally, component of the F(0) channel, it forms part of the peripheral stalk, linking F(1) to F(0). This is ATP synthase subunit b 1 from Rhodopseudomonas palustris (strain ATCC BAA-98 / CGA009).